A 541-amino-acid polypeptide reads, in one-letter code: MGCIKSKENKSPAIKYTPENLTEPVSPSASHYGVEHATVAPTSSTKGASVNFNSLSMTPFGGSSGVTPFGGASSSFSVVSSSYPTGLTGGVTIFVALYDYEARTTEDLSFKKGERFQIINNTEGDWWEARSIATGKSGYIPSNYVVPADSIQAEEWYFGKMGRKDAERLLLNPGNQRGIFLVRESETTKGAYSLSIRDWDEVRGDNVKHYKIRKLDNGGYYITTRAQFDTLQKLVKHYTEHADGLCHKLTTVCPTVKPQTQGLAKDAWEIPRESLRLEVKLGQGCFGEVWMGTWNGTTKVAIKTLKPGTMMPEAFLQEAQIMKKLRHDKLVPLYAVVSEEPIYIVTEFMSKGSLLDFLKEGDGKYLKLPQLVDMAAQIADGMAYIERMNYIHRDLRAANILVGENLICKIADFGLARLIEDNEYTARQGAKFPIKWTAPEAALYGRFTIKSDVWSFGILQTELVTKGRVPYPGMVNREVLEQVERGYRMPCPQGCPESLHELMNLCWKKDPDERPTFEYIQSFLEDYFTATEPQYQPGENL.

Residue Gly2 is the site of N-myristoyl glycine attachment. Cys3 carries S-palmitoyl cysteine; in membrane form lipidation. A Phosphotyrosine modification is found at Tyr32. The 62-residue stretch at 89–150 (GGVTIFVALY…PSNYVVPADS (62 aa)) folds into the SH3 domain. Positions 156-253 (WYFGKMGRKD…GLCHKLTTVC (98 aa)) constitute an SH2 domain. The Protein kinase domain occupies 275 to 528 (LRLEVKLGQG…YIQSFLEDYF (254 aa)). Residues 281-289 (LGQGCFGEV) and Lys303 each bind ATP. Tyr334 and Tyr343 each carry phosphotyrosine. Asp394 functions as the Proton acceptor in the catalytic mechanism. Tyr424 carries the phosphotyrosine; by autocatalysis modification. Tyr535 carries the phosphotyrosine modification.

This sequence belongs to the protein kinase superfamily. Tyr protein kinase family. SRC subfamily. Interacts with YAP1. Interacts with FASLG. Interacts with CTNND1; this interaction allows YES1-mediated activation of FYN and FER and subsequent phosphorylation of CTNND1. Interacts with CSF1R. Interacts with IL6ST/gp130. Interacts with SCRIB, when YES1 is in a closed conformation; the interaction facilitates YES1 autophosphorylation. In terms of processing, phosphorylated. Phosphorylation by CSK on the C-terminal tail maintains the enzyme in an inactive state. Autophosphorylation at Tyr-424 maintains enzyme activity by blocking CSK-mediated inhibition. Palmitoylation at Cys-3 promotes membrane localization.

The protein resides in the cell membrane. It localises to the cytoplasm. It is found in the cytoskeleton. Its subcellular location is the microtubule organizing center. The protein localises to the centrosome. The protein resides in the cytosol. It localises to the cell junction. The enzyme catalyses L-tyrosyl-[protein] + ATP = O-phospho-L-tyrosyl-[protein] + ADP + H(+). Functionally, non-receptor protein tyrosine kinase that is involved in the regulation of cell growth and survival, apoptosis, cell-cell adhesion, cytoskeleton remodeling, and differentiation. Stimulation by receptor tyrosine kinases (RTKs) including EGFR, PDGFR, CSF1R and FGFR leads to recruitment of YES1 to the phosphorylated receptor, and activation and phosphorylation of downstream substrates. Upon EGFR activation, promotes the phosphorylation of PARD3 to favor epithelial tight junction assembly. Participates in the phosphorylation of specific junctional components such as CTNND1 by stimulating the FYN and FER tyrosine kinases at cell-cell contacts. Upon T-cell stimulation by CXCL12, phosphorylates collapsin response mediator protein 2/DPYSL2 and induces T-cell migration. Participates in CD95L/FASLG signaling pathway and mediates AKT-mediated cell migration. Plays a role in cell cycle progression by phosphorylating the cyclin dependent kinase 4/CDK4 thus regulating the G1 phase. Also involved in G2/M progression and cytokinesis. Catalyzes phosphorylation of organic cation transporter OCT2 which induces its transport activity. The sequence is that of Tyrosine-protein kinase Yes (Yes1) from Mus musculus (Mouse).